Reading from the N-terminus, the 199-residue chain is Large ribosomal subunit protein eL13B (199 aa).

Threonine 144 and threonine 152 each carry phosphothreonine.

The protein belongs to the eukaryotic ribosomal protein eL13 family. In terms of assembly, component of the large ribosomal subunit (LSU). Mature yeast ribosomes consist of a small (40S) and a large (60S) subunit. The 40S small subunit contains 1 molecule of ribosomal RNA (18S rRNA) and 33 different proteins (encoded by 57 genes). The large 60S subunit contains 3 rRNA molecules (25S, 5.8S and 5S rRNA) and 46 different proteins (encoded by 81 genes).

It is found in the cytoplasm. In terms of biological role, component of the ribosome, a large ribonucleoprotein complex responsible for the synthesis of proteins in the cell. The small ribosomal subunit (SSU) binds messenger RNAs (mRNAs) and translates the encoded message by selecting cognate aminoacyl-transfer RNA (tRNA) molecules. The large subunit (LSU) contains the ribosomal catalytic site termed the peptidyl transferase center (PTC), which catalyzes the formation of peptide bonds, thereby polymerizing the amino acids delivered by tRNAs into a polypeptide chain. The nascent polypeptides leave the ribosome through a tunnel in the LSU and interact with protein factors that function in enzymatic processing, targeting, and the membrane insertion of nascent chains at the exit of the ribosomal tunnel. This is Large ribosomal subunit protein eL13B from Saccharomyces cerevisiae (strain ATCC 204508 / S288c) (Baker's yeast).